The sequence spans 829 residues: Protein roadkill (829 aa).

3 stretches are compositionally biased toward low complexity: residues 24–36, 122–140, and 266–288; these read EQQQHHLQQQQQQ, TPAATATPPQQQQQQQAAP, and SSSSSSSASASSSSVAASSSSSS. Disordered regions lie at residues 24 to 47, 106 to 142, 266 to 296, and 313 to 400; these read EQQQHHLQQQQQQPATSDNCCCEN, SSLQQQQHQQQQHHPHTPAATATPPQQQQQQQAAPSV, SSSSSSSASASSSSVAASSSSSSHHLHSHHS, and HLNQ…NQQQ. Residues 313-322 show a composition bias toward basic residues; sequence HLNQQQHHHP. Composition is skewed to low complexity over residues 323–353, 372–382, and 389–400; these read LSASSSSASASPSASTSSSSSYQQSSVQQQH, SSSSSSSSSSS, and SSSSSNSNNQQQ. One can recognise an MATH domain in the interval 486-616; sequence KFSYMWTINN…EDKLTIFCEV (131 aa). The 68-residue stretch at 655-722 folds into the BTB domain; sequence SDVTLSVGGR…IYTGKAPNLE (68 aa).

The protein belongs to the Tdpoz family. As to quaternary structure, interacts with ci and gft/CUL3. Expressed near the anterio-posterior compartment boundary of antenna, leg and wing disks.

It localises to the nucleus. It participates in protein modification; protein ubiquitination. Functionally, involved in segment polarity. In complex with gft/CUL3, promotes ubiquitination of ci and its subsequent degradation by the proteasome, which results in hh signaling attenuation. This regulation may be important during eye formation for proper packing of ommatidia into a hexagonal array. The chain is Protein roadkill (rdx) from Drosophila melanogaster (Fruit fly).